We begin with the raw amino-acid sequence, 608 residues long: Altered inheritance of mitochondria protein 9, mitochondrial (608 aa).

A mitochondrion-targeting transit peptide spans 1–21 (MLRRIVNTGTKRLFRVPPRSS).

It belongs to the AIM9 family.

The protein localises to the mitochondrion. The chain is Altered inheritance of mitochondria protein 9, mitochondrial (AIM9) from Clavispora lusitaniae (strain ATCC 42720) (Yeast).